Consider the following 559-residue polypeptide: Formate--tetrahydrofolate ligase (559 aa).

Position 68–75 (68–75 (TPAGEGKT)) interacts with ATP.

Belongs to the formate--tetrahydrofolate ligase family.

It catalyses the reaction (6S)-5,6,7,8-tetrahydrofolate + formate + ATP = (6R)-10-formyltetrahydrofolate + ADP + phosphate. The protein operates within one-carbon metabolism; tetrahydrofolate interconversion. In Rhizobium etli (strain ATCC 51251 / DSM 11541 / JCM 21823 / NBRC 15573 / CFN 42), this protein is Formate--tetrahydrofolate ligase.